The chain runs to 1605 residues: MAAAGGGGPGGPGTGGKIRSRRYHLSSGRTPYSKSRQQQQGIISRVTDTVKSIVPGWLQKYFNKQEEEHDRVHSASEVIVNDTEARENNAEHHIYVVDDDDDEEGNSPTDGRVTPEPIINVDEEVPSTSQSAINNTDALTRPSLHRASLNFNIFDSPALNCQPSTSSAFPIGTSGFSLIKEIKDSTSQHDDDNISTTSGFSSRASDKDLAVSKNVSVPPLWSPEVDRSQSLSHNSSMTSKKPTFNLSAFGSLSPSLGNASILNRQLGDSPFYPGKTTYQGAAAVRSSRVRATPYQAPLRRQVKAKPAAHSQQCGVTSSAARRILQSLEKMSSPLADAKRIPSNSSLSHTPEKNVMDIPENPSKRKKVESPFPPVQRLVTPKSISVSANRSLYIKPSLTPSAVSNTNSRRIQPDKHNESRKNNLQTTSQSHSFSYPKFSTPASNGLSSGTGGGKMMREKGSHYSTKPANEELDGPVLPEIPLPLSTAALPSFQFSTLSGSATSPISVTKPANSTTCRLTSSSPSFTFSSPIVKSTESNAQSPGSSVDFTFSVPAAKASSATSDESKVSAVSRAAKTHAAVSSAKNTDDEQLGFCKPAKTLKEGSVLDMLRSPGFSSSPSLLTSASSLNRSTPTLSKTVGNTFSPANVSLGVGSKQAFGLWQCSACFHENMSSDSNCISCSALKPRPTETSKKLPASPPSSNTKSTVPLSSTPGLGDIFKKPAGMWDCDTCLVQNKAEVTKCVACETPKPGTGMKATLLIPSTTKSTNPATNTLAFASCSASIPNEEMFKKPMGSWECTVCHMQNKTEDNTCVGCKAEKPGTVKSVPTAAPSGLLGLLDQFKKPTGSWDCDVCLIQNKPEANKCIACESAKPGTKAELKGTFDTVKNSVSVAPLSSGQLGLLDQFKKSAGSWDCDVCLVENKPEATKCVACETSKPGTKAELKGFGTSTFSSGTAAPTFKFGVQSSDSTAELKSGASTSGFAKSIGNFKFGLASASTTTEETGKKSFTFGSSTTNEVSAGFKFGIAGSAQTKPDTLSQSTTSGFTFGSVSNTVSLAPTATSSGSTGLQVAAVIADSNLATTATLKSAEEKKAEAPTITPFSFGKTDQNKETASTSFVFGKKDEKTDSAPTGSSFAFGLKKDGEESKQFLFGKPEPTKVDGSAASAGFAFGVTNPTEKKDIEQPGKSVFAFGAQTSITDAGASKQPFSFLTNVSSTAASSSTCGVSSSVFGSVTQSSTPATPSNVFGSAISANAPAPSSGVFGNLTPSNAPAASSTLFGNVAPSSTPSGSSGLFGTAAASSTPATSTSLFGSAAKLSAPASSGGVFNSAAPAAPASTASSVFGSVASSTNTSANSANIFGSSGGAATAPGAFVFGQPASTASTVFGNSSESKSTFVFSGQENKPVTSASTSVTPFLFGAVSASTTPAAPGFNFGRTITSNTTGTSSSPFIFGAGASGSASSSITAQANPVPAFGQSSNPSTAPAFGSSTSVPVFPAGNSQQVPAFGSSSAQPPVFGQQATQPSFGSPAAPSAGSGFPFGNNANFNFNSTNSSGGVFTFNANSGSTTQPPPPGYMFNAAAPGFNMGTNGRTTPASTISTRKIKTARRRK.

Gly residues predominate over residues 1-16; sequence MAAAGGGGPGGPGTGG. Disordered stretches follow at residues 1-44 and 185-208; these read MAAA…GIIS and STSQHDDDNISTTSGFSSRASDKD. Polar residues-rich tracts occupy residues 27–44 and 194–203; these read SGRTPYSKSRQQQQGIIS and ISTTSGFSSR. Copy 1 of the repeat occupies 249-250; it reads FG. The interval 249–1556 is 33 X 2 AA repeats of F-G; sequence FGSLSPSLGN…NSSGGVFTFN (1308 aa). Disordered regions lie at residues 332–373, 397–476, and 497–522; these read SPLA…PFPP, LTPS…GPVL, and SGSATSPISVTKPANSTTCRLTSSSP. Polar residues predominate over residues 397-409; sequence LTPSAVSNTNSRR. Positions 410–420 are enriched in basic and acidic residues; sequence IQPDKHNESRK. 2 stretches are compositionally biased toward polar residues: residues 421-432 and 497-517; these read NNLQTTSQSHSF and SGSATSPISVTKPANSTTCRL. The RanBP2-type 1 zinc finger occupies 655-684; that stretch reads AFGLWQCSACFHENMSSDSNCISCSALKPR. Repeat 2 spans residues 656–657; that stretch reads FG. Positions 661, 664, 675, and 678 each coordinate Zn(2+). Residues 686 to 711 form a disordered region; it reads TETSKKLPASPPSSNTKSTVPLSSTP. The segment covering 697-711 has biased composition (polar residues); sequence PSSNTKSTVPLSSTP. 4 RanBP2-type zinc fingers span residues 720-749, 790-819, 842-871, and 906-935; these read PAGMWDCDTCLVQNKAEVTKCVACETPKPG, PMGSWECTVCHMQNKTEDNTCVGCKAEKPG, PTGSWDCDVCLIQNKPEANKCIACESAKPG, and SAGSWDCDVCLVENKPEATKCVACETSKPG. Zn(2+)-binding residues include cysteine 726, cysteine 729, cysteine 740, cysteine 743, cysteine 796, cysteine 799, cysteine 810, cysteine 813, cysteine 848, cysteine 851, cysteine 862, and cysteine 865. Repeat copies occupy residues 943–944, 959–960, 988–989, 1007–1008, 1021–1022, 1044–1045, 1100–1101, 1116–1117, 1134–1135, 1148–1149, 1167–1168, 1188–1189, 1227–1228, 1243–1244, 1259–1260, 1275–1276, 1291–1292, 1307–1308, 1339–1340, 1356–1357, 1371–1372, 1382–1383, 1414–1415, 1430–1431, 1448–1449, 1470–1471, 1482–1483, 1502–1503, 1512–1513, 1521–1522, and 1535–1536. The segment covering 1499–1518 has biased composition (polar residues); that stretch reads VPAFGSSSAQPPVFGQQATQ. The tract at residues 1499–1529 is disordered; the sequence is VPAFGSSSAQPPVFGQQATQPSFGSPAAPSA. Over residues 1519–1529 the composition is skewed to low complexity; it reads PSFGSPAAPSA. A disordered region spans residues 1556 to 1605; that stretch reads NANSGSTTQPPPPGYMFNAAAPGFNMGTNGRTTPASTISTRKIKTARRRK. The segment covering 1581–1595 has biased composition (polar residues); it reads MGTNGRTTPASTIST. Residues 1596-1605 are compositionally biased toward basic residues; it reads RKIKTARRRK.

This sequence belongs to the NUP153 family. In terms of assembly, interacts (via C-terminal domain) with the nuclear receptor kpnb1; the interaction occurs in a RanGTP-dependent manner. Associates with the Importin alpha/Importin beta receptor. Zn(2+) is required as a cofactor. Egg (at protein level).

It localises to the nucleus membrane. The protein resides in the nucleus. Its subcellular location is the nuclear pore complex. Functionally, component of the nuclear pore complex (NPC), a complex required for the trafficking across the nuclear envelope. Functions as a scaffolding element in the nuclear phase of the NPC essential for normal nucleocytoplasmic transport of proteins and mRNAs. May be involved in the retention of unspliced mRNAs in the nucleus. Probably mediates tpr anchoring to the nuclear membrane at NPC. Possible DNA-binding subunit of the nuclear pore complex (NPC). The chain is Nuclear pore complex protein Nup153 (nup153) from Xenopus laevis (African clawed frog).